A 1257-amino-acid chain; its full sequence is Period circadian protein homolog 2 (1257 aa).

The interval methionine 1 to glycine 59 is disordered. A compositionally biased stretch (low complexity) spans serine 8–glutamine 25. Polar residues predominate over residues serine 35–serine 53. The Nuclear export signal 1 motif lies at leucine 109–valine 118. Positions isoleucine 179–leucine 246 constitute a PAS 1 domain. The LXXLL signature appears at leucine 306 to leucine 310. Positions tyrosine 319–glutamine 385 constitute a PAS 2 domain. One can recognise a PAC domain in the interval tyrosine 393–proline 436. Positions leucine 460–methionine 469 match the Nuclear export signal 2 motif. Residues proline 471–lysine 567 are disordered. Residues serine 478–serine 482 are important for protein stability. Polar residues-rich tracts occupy residues methionine 493–glutamine 504 and serine 518–serine 528. Residues arginine 510–lysine 709 form a CSNK1E binding domain region. A phosphoserine mark is found at serine 525, serine 528, serine 531, serine 538, and serine 544. Residues glutamate 541–threonine 555 are compositionally biased toward polar residues. Threonine 554 is subject to Phosphothreonine. Phosphoserine occurs at positions 659, 693, 697, 706, 758, and 763. Disordered regions lie at residues aspartate 678–serine 706 and arginine 757–alanine 833. The Nuclear localization signal signature appears at lysine 778 to arginine 794. Basic residues predominate over residues lysine 779 to lysine 792. Residues serine 821 to serine 832 show a composition bias toward low complexity. Residue threonine 858 is modified to Phosphothreonine. The interval glutamate 882–leucine 1067 is interaction with PPARG. At serine 939 the chain carries Phosphoserine. Position 964 is a phosphothreonine (threonine 964). A Phosphoserine modification is found at serine 971. The Nuclear export signal 3 signature appears at leucine 983 to leucine 990. The disordered stretch occupies residues alanine 993–isoleucine 1044. Low complexity predominate over residues serine 996 to leucine 1014. Polar residues predominate over residues serine 1033–isoleucine 1044. The short motif at leucine 1051 to leucine 1055 is the LXXLL element. The span at serine 1070–serine 1089 shows a compositional bias: low complexity. Positions serine 1070 to isoleucine 1108 are disordered. Polar residues predominate over residues arginine 1090–isoleucine 1108. A Phosphoserine modification is found at serine 1126. A CRY binding domain region spans residues serine 1157–threonine 1257. The disordered stretch occupies residues glutamate 1226 to threonine 1257.

In terms of assembly, homodimer. Component of the circadian core oscillator, which includes the CRY proteins, CLOCK or NPAS2, BMAL1 or BMAL2, CSNK1D and/or CSNK1E, TIMELESS, and the PER proteins. Interacts with CLOCK-BMAL1 (off DNA). Interacts directly with PER1 and PER3, and through a C-terminal domain, with CRY1 and CRY2. Interacts (via PAS 2 domain) with TIMELESS. Interacts with NFIL3. Different large complexes have been identified with different repressive functions. The core of PER complexes is composed of at least PER1, PER2, PER3, CRY1, CRY2, CSNK1D and/or CSNK1E. The large PER complex involved in the repression of transcriptional termination is composed of at least PER2, CDK9, DDX5, DHX9, NCBP1 and POLR2A (active). The large PER complex involved in the histone deacetylation is composed of at least HDAC1, PER2, SFPQ and SIN3A. The large PER complex involved in the histone methylation is composed of at least PER2, CBX3, TRIM28, SUV39H1 and/or SUV39H2; CBX3 mediates the formation of the complex. Interacts with SETX; the interaction inhibits termination of circadian target genes. Interacts with the nuclear receptors HNF4A, NR1D1, NR4A2, RORA, PPARA, PPARG and THRA; the interaction with at least PPARG is ligand dependent. Interacts with PML. Interacts (phosphorylated) with BTRC and FBXW11; the interactions trigger proteasomal degradation. Interacts with NONO and SFPQ. Interacts with CAVIN3. Interacts with MAGEL2. Interacts with MAP1LC3B. Interacts with HNF4A. Acetylated. Deacetylated by SIRT1, resulting in decreased protein stability. Deacetylated by SIRT6, preventing its degradation by the proteasome, resulting in increased protein stability. In terms of processing, phosphorylated by CSNK1E and CSNK1D. Phosphorylation results in PER2 protein degradation. May be dephosphorylated by PP1. Post-translationally, ubiquitinated, leading to its proteasomal degradation. Ubiquitination may be inhibited by CRY1. As to expression, expressed in all tissues examined including eye, brain, heart, lung, spleen, liver, pancreas and kidney. In the CNS, highly expressed in the SCN, internal granular layer of granular cells of the olfactory bulb, tuberculum olfactorium, piriform cortex, gyrus dentatus of the hippocampus, cerebellum, pars tuberalis/median eminence, and pituitary, and moderately in the tenia tecta, caudate putamen, accumbens nucleus, superior and inferior colliculus and pineal gland.

The protein localises to the nucleus. The protein resides in the cytoplasm. It localises to the perinuclear region. Transcriptional repressor which forms a core component of the circadian clock. The circadian clock, an internal time-keeping system, regulates various physiological processes through the generation of approximately 24 hour circadian rhythms in gene expression, which are translated into rhythms in metabolism and behavior. It is derived from the Latin roots 'circa' (about) and 'diem' (day) and acts as an important regulator of a wide array of physiological functions including metabolism, sleep, body temperature, blood pressure, endocrine, immune, cardiovascular, and renal function. Consists of two major components: the central clock, residing in the suprachiasmatic nucleus (SCN) of the brain, and the peripheral clocks that are present in nearly every tissue and organ system. Both the central and peripheral clocks can be reset by environmental cues, also known as Zeitgebers (German for 'timegivers'). The predominant Zeitgeber for the central clock is light, which is sensed by retina and signals directly to the SCN. The central clock entrains the peripheral clocks through neuronal and hormonal signals, body temperature and feeding-related cues, aligning all clocks with the external light/dark cycle. Circadian rhythms allow an organism to achieve temporal homeostasis with its environment at the molecular level by regulating gene expression to create a peak of protein expression once every 24 hours to control when a particular physiological process is most active with respect to the solar day. Transcription and translation of core clock components (CLOCK, NPAS2, BMAL1, BMAL2, PER1, PER2, PER3, CRY1 and CRY2) plays a critical role in rhythm generation, whereas delays imposed by post-translational modifications (PTMs) are important for determining the period (tau) of the rhythms (tau refers to the period of a rhythm and is the length, in time, of one complete cycle). A diurnal rhythm is synchronized with the day/night cycle, while the ultradian and infradian rhythms have a period shorter and longer than 24 hours, respectively. Disruptions in the circadian rhythms contribute to the pathology of cardiovascular diseases, cancer, metabolic syndrome and aging. A transcription/translation feedback loop (TTFL) forms the core of the molecular circadian clock mechanism. Transcription factors, CLOCK or NPAS2 and BMAL1 or BMAL2, form the positive limb of the feedback loop, act in the form of a heterodimer and activate the transcription of core clock genes and clock-controlled genes (involved in key metabolic processes), harboring E-box elements (5'-CACGTG-3') within their promoters. The core clock genes: PER1/2/3 and CRY1/2 which are transcriptional repressors form the negative limb of the feedback loop and interact with the CLOCK|NPAS2-BMAL1|BMAL2 heterodimer inhibiting its activity and thereby negatively regulating their own expression. This heterodimer also activates nuclear receptors NR1D1/2 and RORA/B/G, which form a second feedback loop and which activate and repress BMAL1 transcription, respectively. PER1 and PER2 proteins transport CRY1 and CRY2 into the nucleus with appropriate circadian timing, but also contribute directly to repression of clock-controlled target genes through interaction with several classes of RNA-binding proteins, helicases and others transcriptional repressors. PER appears to regulate circadian control of transcription by at least three different modes. First, interacts directly with the CLOCK-BMAL1 at the tail end of the nascent transcript peak to recruit complexes containing the SIN3-HDAC that remodel chromatin to repress transcription. Second, brings H3K9 methyltransferases such as SUV39H1 and SUV39H2 to the E-box elements of the circadian target genes, like PER2 itself or PER1. The recruitment of each repressive modifier to the DNA seems to be very precisely temporally orchestrated by the large PER complex, the deacetylases acting before than the methyltransferases. Additionally, large PER complexes are also recruited to the target genes 3' termination site through interactions with RNA-binding proteins and helicases that may play a role in transcription termination to regulate transcription independently of CLOCK-BMAL1 interactions. Recruitment of large PER complexes to the elongating polymerase at PER and CRY termination sites inhibited SETX action, impeding RNA polymerase II release and thereby repressing transcriptional reinitiation. May propagate clock information to metabolic pathways via the interaction with nuclear receptors. Coactivator of PPARA and corepressor of NR1D1, binds rhythmically at the promoter of nuclear receptors target genes like BMAL1 or G6PC1. Directly and specifically represses PPARG proadipogenic activity by blocking PPARG recruitment to target promoters and thereby transcriptional activation. Required for fatty acid and lipid metabolism, is involved as well in the regulation of circulating insulin levels. Plays an important role in the maintenance of cardiovascular functions through the regulation of NO and vasodilatatory prostaglandins production in aortas. Controls circadian glutamate uptake in synaptic vesicles through the regulation of VGLUT1 expression. May also be involved in the regulation of inflammatory processes. Represses the CLOCK-BMAL1 induced transcription of BHLHE40/DEC1 and ATF4. Negatively regulates the formation of the TIMELESS-CRY1 complex by competing with TIMELESS for binding to CRY1. In Rattus norvegicus (Rat), this protein is Period circadian protein homolog 2.